A 288-amino-acid chain; its full sequence is Diaminopimelate epimerase (288 aa).

Substrate contacts are provided by N17, Q47, and N67. The active-site Proton donor is the C76. Residues 77–78 (GN), N163, N196, and 214–215 (ER) contribute to the substrate site. C223 acts as the Proton acceptor in catalysis. 224–225 (GS) lines the substrate pocket.

Belongs to the diaminopimelate epimerase family. In terms of assembly, homodimer.

Its subcellular location is the cytoplasm. It catalyses the reaction (2S,6S)-2,6-diaminopimelate = meso-2,6-diaminopimelate. The protein operates within amino-acid biosynthesis; L-lysine biosynthesis via DAP pathway; DL-2,6-diaminopimelate from LL-2,6-diaminopimelate: step 1/1. Functionally, catalyzes the stereoinversion of LL-2,6-diaminopimelate (L,L-DAP) to meso-diaminopimelate (meso-DAP), a precursor of L-lysine and an essential component of the bacterial peptidoglycan. This is Diaminopimelate epimerase from Rhodopseudomonas palustris (strain BisB18).